The following is a 65-amino-acid chain: Muscarinic toxin-like protein 1 (65 aa).

Intrachain disulfides connect Cys-3-Cys-24, Cys-17-Cys-42, Cys-46-Cys-57, and Cys-58-Cys-63.

Belongs to the three-finger toxin family. Short-chain subfamily. Type C muscarinic toxin sub-subfamily. Monomer. Expressed by the venom gland.

The protein localises to the secreted. In terms of biological role, binds weakly to the muscarinic acetylcholine receptor (CHRM). In Naja kaouthia (Monocled cobra), this protein is Muscarinic toxin-like protein 1.